The sequence spans 326 residues: Transformer-2 protein homolog (326 aa).

Disordered stretches follow at residues 1–114 (MEVA…PSNV) and 179–326 (LHGK…SYRR). The segment covering 38 to 55 (RDSRERSPPRGNSRERSP) has biased composition (basic and acidic residues). Over residues 56 to 85 (PRGGSPNRGGSPNRGGSPNRGGSPNRGGSP) the composition is skewed to low complexity. Residues 104–113 (RLANTASPSN) show a composition bias toward polar residues. Residues 113–191 (NVLGVFGLAP…KSIRTDFSAT (79 aa)) form the RRM domain. Residues 220 to 239 (YGGGDRYGRGDYGGRGGGGD) are compositionally biased toward gly residues. The span at 240–326 (RYGRDDRGGD…DERPRDSYRR (87 aa)) shows a compositional bias: basic and acidic residues.

The protein belongs to the splicing factor SR family.

The protein resides in the nucleus. In terms of biological role, sequence-specific RNA-binding protein which participates in the control of pre-mRNA splicing. This is Transformer-2 protein homolog (tra2) from Dictyostelium discoideum (Social amoeba).